A 450-amino-acid chain; its full sequence is Divalent metal cation transporter MntH (450 aa).

Helical transmembrane passes span 34–54 (LSFL…GNWI), 59–81 (GGAQ…AMLL), 108–128 (IAII…IAEV), 141–161 (IPLI…LFIM), 170–190 (AIVG…VYIS), 212–232 (GILY…NLYL), 263–283 (IQLS…ASLF), 305–325 (PVLG…ALLA), 361–381 (SLAV…AAKI), 383–403 (QLLV…LIPL), and 422–442 (VNII…YLIV).

This sequence belongs to the NRAMP family.

The protein resides in the cell membrane. Its function is as follows. H(+)-stimulated, divalent metal cation uptake system. In Staphylococcus aureus (strain MRSA252), this protein is Divalent metal cation transporter MntH.